Here is a 192-residue protein sequence, read N- to C-terminus: Probable GTP-binding protein EngB (192 aa).

An EngB-type G domain is found at 22–192 (QLPEIVFVGR…LLEQLAIYTG (171 aa)). GTP-binding positions include 30 to 37 (GRSNVGKS), 57 to 61 (GKTQL), 75 to 78 (DLPG), 142 to 145 (TKYD), and 172 to 174 (YSA). Residues Ser37 and Thr59 each contribute to the Mg(2+) site.

The protein belongs to the TRAFAC class TrmE-Era-EngA-EngB-Septin-like GTPase superfamily. EngB GTPase family. The cofactor is Mg(2+).

Its function is as follows. Necessary for normal cell division and for the maintenance of normal septation. The sequence is that of Probable GTP-binding protein EngB from Chlorobium phaeobacteroides (strain BS1).